The sequence spans 988 residues: Ephrin type-B receptor 3 (988 aa).

The tract at residues 1–24 (GVSSRARRPPGSSRSSRRGVTSEL) is disordered. Residues 1–534 (GVSSRARRPP…TSKTFQELPL (534 aa)) are Extracellular-facing. The region spanning 11–189 (GSSRSSRRGV…FYKKCSNTIA (179 aa)) is the Eph LBD domain. An intrachain disulfide couples C53 to C171. 2 consecutive Fibronectin type-III domains span residues 311-424 (VPSA…TNQA) and 425-522 (APSA…TAED). 2 N-linked (GlcNAc...) asparagine glycosylation sites follow: N323 and N418. The helical transmembrane segment at 535-555 (IVGSATAGLLFVIVVVIIAIV) threads the bilayer. Residues 556 to 988 (CFRKGMVTEQ…QMNQTLPVQV (433 aa)) are Cytoplasmic-facing. Phosphotyrosine; by autocatalysis is present on Y604. Residues 623–886 (VKIEEVIGAG…QIVNTLDKLI (264 aa)) form the Protein kinase domain. Residues 629-637 (IGAGEFGEV) and K655 each bind ATP. The active-site Proton acceptor is D748. Residues 915 to 979 (TTFTTVGDWL…LSSIQDMRLQ (65 aa)) form the SAM domain. A PDZ-binding motif is present at residues 986–988 (VQV).

Belongs to the protein kinase superfamily. Tyr protein kinase family. Ephrin receptor subfamily. Heterotetramer upon binding of the ligand. The heterotetramer is composed of an ephrin dimer and a receptor dimer. Oligomerization is probably required to induce biological responses. Post-translationally, phosphorylated. Autophosphorylates upon ligand-binding. Autophosphorylation on Tyr-604 is required for interaction with SH2 domain-containing proteins. As to expression, present in 10-day embryonic brain and body tissues. Prominent expression in kidney. Lower expression in lung, and barely detectable in brain, liver, heart, skeletal muscle and thymus.

Its subcellular location is the cell membrane. The protein resides in the cell projection. It localises to the dendrite. The enzyme catalyses L-tyrosyl-[protein] + ATP = O-phospho-L-tyrosyl-[protein] + ADP + H(+). Receptor tyrosine kinase which binds promiscuously transmembrane ephrin-B family ligands residing on adjacent cells, leading to contact-dependent bidirectional signaling into neighboring cells. The signaling pathway downstream of the receptor is referred to as forward signaling while the signaling pathway downstream of the ephrin ligand is referred to as reverse signaling. Generally has an overlapping and redundant function with EPHB2. Like EPHB2, functions in axon guidance during development. In addition to its role in axon guidance also plays an important redundant role with other ephrin-B receptors in development and maturation of dendritic spines and the formation of excitatory synapses. May control other aspects of development through regulation of cell migration and positioning. The sequence is that of Ephrin type-B receptor 3 (EPHB3) from Gallus gallus (Chicken).